A 137-amino-acid polypeptide reads, in one-letter code: Early nodulin-55-1 (137 aa).

Residues 1–67 (KYDERTESVH…GLKLMVVVMS (67 aa)) form the Phytocyanin domain. N13, N51, and N68 each carry an N-linked (GlcNAc...) asparagine glycan. The cysteines at positions 20 and 55 are disulfide-linked. Positions 70 to 115 (TKKKLIHSPSPSSPSPSPSPSPSPSPSPSPSLSSPSPSPLPNNQGV) are disordered. Positions 80 to 98 (PSSPSPSPSPSPSPSPSPS) are enriched in pro residues.

Belongs to the early nodulin-like (ENODL) family.

Its subcellular location is the symbiosome. The protein localises to the peribacteroid membrane. Functionally, may act as a carbohydrate transporter. The protein is Early nodulin-55-1 of Glycine max (Soybean).